Reading from the N-terminus, the 895-residue chain is Probable LRR receptor-like serine/threonine-protein kinase At5g48740 (895 aa).

Positions 1 to 16 (MLFWVLLSSFCVFCFS) are cleaved as a signal peptide. The Extracellular segment spans residues 17–544 (SPDGFLSLSC…INKKQRKQNR (528 aa)). N-linked (GlcNAc...) asparagine glycosylation is found at asparagine 36, asparagine 50, asparagine 60, asparagine 140, asparagine 195, asparagine 234, and asparagine 318. LRR repeat units follow at residues 385–407 (RVTS…GDLL), 408–430 (DLKT…GSLK), 431–453 (DLQK…EDLV), 454–477 (NLEV…GKLK), 478–500 (KLRL…LNIT), and 511–532 (CLSF…PQVT). Residues asparagine 416, asparagine 436, asparagine 462, asparagine 498, and asparagine 521 are each glycosylated (N-linked (GlcNAc...) asparagine). Residues 545–565 (IAILLGVSGGALFATFLVFVF) form a helical membrane-spanning segment. Topologically, residues 566–895 (MSIFTRRQRN…SYLAASAHTD (330 aa)) are cytoplasmic. The region spanning 606–888 (RNFKEVIGRG…EAYSLQLSYL (283 aa)) is the Protein kinase domain. ATP contacts are provided by residues 612–620 (IGRGSFGAV) and lysine 634. A Phosphotyrosine modification is found at tyrosine 679. The Proton acceptor role is filled by aspartate 732. Residue serine 736 is modified to Phosphoserine. Residues threonine 767 and threonine 772 each carry the phosphothreonine modification. Position 780 is a phosphotyrosine (tyrosine 780).

The protein belongs to the protein kinase superfamily. Ser/Thr protein kinase family.

It localises to the membrane. The enzyme catalyses L-seryl-[protein] + ATP = O-phospho-L-seryl-[protein] + ADP + H(+). It carries out the reaction L-threonyl-[protein] + ATP = O-phospho-L-threonyl-[protein] + ADP + H(+). The polypeptide is Probable LRR receptor-like serine/threonine-protein kinase At5g48740 (Arabidopsis thaliana (Mouse-ear cress)).